The primary structure comprises 599 residues: DNA primase (599 aa).

Residues 38-62 (CPFHQEKTPSFTVSDSKRFFYCFGC) form a CHC2-type zinc finger. One can recognise a Toprim domain in the interval 250 to 332 (NYSILVEGYF…EKKISFIRLP (83 aa)). Mg(2+) is bound by residues glutamate 256, aspartate 300, and aspartate 302.

The protein belongs to the DnaG primase family. Monomer. Interacts with DnaB. Zn(2+) serves as cofactor. Requires Mg(2+) as cofactor.

The enzyme catalyses ssDNA + n NTP = ssDNA/pppN(pN)n-1 hybrid + (n-1) diphosphate.. RNA polymerase that catalyzes the synthesis of short RNA molecules used as primers for DNA polymerase during DNA replication. In Rickettsia bellii (strain RML369-C), this protein is DNA primase.